We begin with the raw amino-acid sequence, 519 residues long: GTPase Der (519 aa).

Acidic residues-rich tracts occupy residues 1 to 12 (MDVEGAFADEEE) and 30 to 54 (GYED…PDFG). The segment at 1–54 (MDVEGAFADEEELAPHGGWASADFDPAEFGYEDSDDDFDAEDFDETEFSNPDFG) is disordered. 2 consecutive EngA-type G domains span residues 81–244 (CTVA…PEEP) and 254–427 (RRVA…DNWD). GTP-binding positions include 87–94 (GRPNVGKS), 134–138 (DTGGW), 196–199 (NKFD), 260–267 (GKPNVGKS), 307–311 (DTAGL), and 372–375 (NKWD). In terms of domain architecture, KH-like spans 428–510 (RRISTGQLNT…PVRIAVRVRE (83 aa)).

The protein belongs to the TRAFAC class TrmE-Era-EngA-EngB-Septin-like GTPase superfamily. EngA (Der) GTPase family. Associates with the 50S ribosomal subunit.

In terms of biological role, GTPase that plays an essential role in the late steps of ribosome biogenesis. This chain is GTPase Der, found in Corynebacterium glutamicum (strain ATCC 13032 / DSM 20300 / JCM 1318 / BCRC 11384 / CCUG 27702 / LMG 3730 / NBRC 12168 / NCIMB 10025 / NRRL B-2784 / 534).